The sequence spans 426 residues: Glutamate-1-semialdehyde 2,1-aminomutase (426 aa).

Residue lysine 265 is modified to N6-(pyridoxal phosphate)lysine.

This sequence belongs to the class-III pyridoxal-phosphate-dependent aminotransferase family. HemL subfamily. In terms of assembly, homodimer. Requires pyridoxal 5'-phosphate as cofactor.

The protein resides in the cytoplasm. The catalysed reaction is (S)-4-amino-5-oxopentanoate = 5-aminolevulinate. It functions in the pathway porphyrin-containing compound metabolism; protoporphyrin-IX biosynthesis; 5-aminolevulinate from L-glutamyl-tRNA(Glu): step 2/2. This Pseudoalteromonas translucida (strain TAC 125) protein is Glutamate-1-semialdehyde 2,1-aminomutase.